We begin with the raw amino-acid sequence, 218 residues long: Pyridoxine/pyridoxamine 5'-phosphate oxidase (218 aa).

Residues 14 to 17 (RREY) and Lys72 each bind substrate. FMN-binding positions include 67–72 (RIVLLK), 82–83 (YT), Arg88, Lys89, and Gln111. Positions 129, 133, and 137 each coordinate substrate. Residues 146–147 (QS) and Trp191 each bind FMN. 197–199 (RLH) provides a ligand contact to substrate. Arg201 lines the FMN pocket.

The protein belongs to the pyridoxamine 5'-phosphate oxidase family. In terms of assembly, homodimer. FMN is required as a cofactor.

It catalyses the reaction pyridoxamine 5'-phosphate + O2 + H2O = pyridoxal 5'-phosphate + H2O2 + NH4(+). The catalysed reaction is pyridoxine 5'-phosphate + O2 = pyridoxal 5'-phosphate + H2O2. Its pathway is cofactor metabolism; pyridoxal 5'-phosphate salvage; pyridoxal 5'-phosphate from pyridoxamine 5'-phosphate: step 1/1. The protein operates within cofactor metabolism; pyridoxal 5'-phosphate salvage; pyridoxal 5'-phosphate from pyridoxine 5'-phosphate: step 1/1. Functionally, catalyzes the oxidation of either pyridoxine 5'-phosphate (PNP) or pyridoxamine 5'-phosphate (PMP) into pyridoxal 5'-phosphate (PLP). This Cronobacter sakazakii (strain ATCC BAA-894) (Enterobacter sakazakii) protein is Pyridoxine/pyridoxamine 5'-phosphate oxidase.